A 163-amino-acid polypeptide reads, in one-letter code: Epithelial membrane protein 3 (163 aa).

Residues 4–24 (LLLVVSALHILILVLLFVATL) traverse the membrane as a helical segment. N-linked (GlcNAc...) asparagine glycosylation is found at asparagine 46 and asparagine 56. 3 helical membrane-spanning segments follow: residues 66–86 (VQAL…LFMF), 100–120 (TGLC…IYAI), and 139–159 (FALA…YIHL).

Belongs to the PMP-22/EMP/MP20 family.

It localises to the membrane. Functionally, probably involved in cell proliferation and cell-cell interactions. The polypeptide is Epithelial membrane protein 3 (Emp3) (Mus musculus (Mouse)).